A 161-amino-acid polypeptide reads, in one-letter code: ATP synthase subunit b (161 aa).

A helical membrane pass occupies residues 1–21 (MYLNATILGQVIAFILFVWFC).

This sequence belongs to the ATPase B chain family. As to quaternary structure, F-type ATPases have 2 components, F(1) - the catalytic core - and F(0) - the membrane proton channel. F(1) has five subunits: alpha(3), beta(3), gamma(1), delta(1), epsilon(1). F(0) has three main subunits: a(1), b(2) and c(10-14). The alpha and beta chains form an alternating ring which encloses part of the gamma chain. F(1) is attached to F(0) by a central stalk formed by the gamma and epsilon chains, while a peripheral stalk is formed by the delta and b chains.

It localises to the cell inner membrane. In terms of biological role, f(1)F(0) ATP synthase produces ATP from ADP in the presence of a proton or sodium gradient. F-type ATPases consist of two structural domains, F(1) containing the extramembraneous catalytic core and F(0) containing the membrane proton channel, linked together by a central stalk and a peripheral stalk. During catalysis, ATP synthesis in the catalytic domain of F(1) is coupled via a rotary mechanism of the central stalk subunits to proton translocation. Its function is as follows. Component of the F(0) channel, it forms part of the peripheral stalk, linking F(1) to F(0). The chain is ATP synthase subunit b from Blochmanniella floridana.